The primary structure comprises 64 residues: Phi-buthitoxin-Hj1a (64 aa).

An N-terminal signal peptide occupies residues M1 to A18. Cystine bridges form between C29–C43, C36–C49, and C42–C58.

Belongs to the scorpion calcin-like family. As to expression, expressed by the venom gland.

The protein resides in the secreted. May increase intracellular calcium release through the activation of nuclear inositol 1,4,5-trisphosphate receptors (ITPR) of cardiomyocytes, thereby causing an increase in the contraction frequency of these cells. In Hottentotta judaicus (Black scorpion), this protein is Phi-buthitoxin-Hj1a.